The sequence spans 200 residues: dTTP/UTP pyrophosphatase (200 aa).

Asp-80 (proton acceptor) is an active-site residue.

This sequence belongs to the Maf family. YhdE subfamily. A divalent metal cation is required as a cofactor.

The protein resides in the cytoplasm. It carries out the reaction dTTP + H2O = dTMP + diphosphate + H(+). The catalysed reaction is UTP + H2O = UMP + diphosphate + H(+). In terms of biological role, nucleoside triphosphate pyrophosphatase that hydrolyzes dTTP and UTP. May have a dual role in cell division arrest and in preventing the incorporation of modified nucleotides into cellular nucleic acids. The polypeptide is dTTP/UTP pyrophosphatase (Pasteurella multocida (strain Pm70)).